A 295-amino-acid chain; its full sequence is Iron-sulfur cluster carrier protein (295 aa).

Residue 38–45 (GKGGVGKS) coordinates ATP.

Belongs to the Mrp/NBP35 ATP-binding proteins family. As to quaternary structure, homodimer.

Its function is as follows. Binds and transfers iron-sulfur (Fe-S) clusters to target apoproteins. Can hydrolyze ATP. This chain is Iron-sulfur cluster carrier protein, found in Pyrococcus abyssi (strain GE5 / Orsay).